Consider the following 448-residue polypeptide: Protein EVI2B (448 aa).

An N-terminal signal peptide occupies residues 1-21 (MDPKYFILILFCGHLNNTFFS). N16 and N50 each carry an N-linked (GlcNAc...) asparagine glycan. The Extracellular segment spans residues 22–202 (KTETITTEKQ…QTPQKNNYNS (181 aa)). A disordered region spans residues 74–108 (AKVTAGQPTPAVYTSSEKPEAHTSAGQPLAYNTKQ). Residues 97-108 (SAGQPLAYNTKQ) are compositionally biased toward polar residues. N114 is a glycosylation site (N-linked (GlcNAc...) asparagine). The chain crosses the membrane as a helical span at residues 203-226 (IAAILIGVLLTSMLVAIIIIVLWK). At 227–448 (CLRKPVLNDQ…SLPPPPAELL (222 aa)) the chain is on the cytoplasmic side. At T249 the chain carries Phosphothreonine. S268, S271, S278, and S294 each carry phosphoserine. Disordered stretches follow at residues 298 to 372 (IEDS…DSTS) and 427 to 448 (SIPPNSDQDLNESLPPPPAELL). Composition is skewed to polar residues over residues 313 to 333 (VNGTSEDSADGSTVGTAVSSS) and 350 to 372 (QESNQSDKPTMTIVSPLPNDSTS).

Bone marrow, peripheral blood mononuclear cells, fibroblasts and Epstein-Barr virus-transformed lymphoblastoid cell lines. Strongly expressed in granulocytic cells, and weakly on lymphocytes cells.

It localises to the membrane. Required for granulocyte differentiation and functionality of hematopoietic progenitor cells through the control of cell cycle progression and survival of hematopoietic progenitor cells. This Homo sapiens (Human) protein is Protein EVI2B.